A 37-amino-acid chain; its full sequence is Cortex morphogenetic protein A (37 aa).

Can form a complex with SpoIVA and ClpX.

It is found in the forespore. Its function is as follows. Ensures proper spore envelope assembly. Represses premature cortex assembly until coat assembly successfully initiates. Also participates in a quality-control pathway that selectively removes defective sporulating cells through regulated cell death. Acts as an adaptator that delivers SpoIVA to the ClpXP proteolytic machinery for degradation, specifically in cells that improperly assemble the spore envelope. The chain is Cortex morphogenetic protein A from Bacillus subtilis (strain 168).